The following is a 31-amino-acid chain: DGKCAGQDKPCKNSCDCCGARGECVYTGYXP.

Intrachain disulfides connect Cys4–Cys18 and Cys11–Cys24.

Expressed by the venom gland.

The protein localises to the secreted. In terms of biological role, blocks voltage-gated sodium channels (Nav). This is U8-ctenitoxin-Co1a from Ctenus ornatus (Brazilian spider).